The sequence spans 255 residues: Leucyl/phenylalanyl-tRNA--protein transferase (255 aa).

Belongs to the L/F-transferase family.

It localises to the cytoplasm. It carries out the reaction N-terminal L-lysyl-[protein] + L-leucyl-tRNA(Leu) = N-terminal L-leucyl-L-lysyl-[protein] + tRNA(Leu) + H(+). The enzyme catalyses N-terminal L-arginyl-[protein] + L-leucyl-tRNA(Leu) = N-terminal L-leucyl-L-arginyl-[protein] + tRNA(Leu) + H(+). It catalyses the reaction L-phenylalanyl-tRNA(Phe) + an N-terminal L-alpha-aminoacyl-[protein] = an N-terminal L-phenylalanyl-L-alpha-aminoacyl-[protein] + tRNA(Phe). Its function is as follows. Functions in the N-end rule pathway of protein degradation where it conjugates Leu, Phe and, less efficiently, Met from aminoacyl-tRNAs to the N-termini of proteins containing an N-terminal arginine or lysine. In Burkholderia pseudomallei (strain 1106a), this protein is Leucyl/phenylalanyl-tRNA--protein transferase.